Here is a 397-residue protein sequence, read N- to C-terminus: Elongation factor Tu (397 aa).

The region spanning Lys-10–Glu-206 is the tr-type G domain. The segment at Gly-19 to Thr-26 is G1. Gly-19–Thr-26 contacts GTP. A Mg(2+)-binding site is contributed by Thr-26. Residues Gly-62–Ser-66 are G2. Residues Asp-83–Gly-86 form a G3 region. GTP-binding positions include Asp-83–His-87 and Asn-138–Asp-141. Residues Asn-138–Asp-141 are G4. The segment at Ser-176 to Leu-178 is G5.

It belongs to the TRAFAC class translation factor GTPase superfamily. Classic translation factor GTPase family. EF-Tu/EF-1A subfamily. In terms of assembly, monomer.

It is found in the cytoplasm. It catalyses the reaction GTP + H2O = GDP + phosphate + H(+). Functionally, GTP hydrolase that promotes the GTP-dependent binding of aminoacyl-tRNA to the A-site of ribosomes during protein biosynthesis. In Kineococcus radiotolerans (strain ATCC BAA-149 / DSM 14245 / SRS30216), this protein is Elongation factor Tu.